The chain runs to 285 residues: Probable endonuclease 4 (285 aa).

Residues H69, H109, E145, D179, H182, H216, D229, H231, and E261 each coordinate Zn(2+).

It belongs to the AP endonuclease 2 family. Zn(2+) serves as cofactor.

It carries out the reaction Endonucleolytic cleavage to 5'-phosphooligonucleotide end-products.. Its function is as follows. Endonuclease IV plays a role in DNA repair. It cleaves phosphodiester bonds at apurinic or apyrimidinic (AP) sites, generating a 3'-hydroxyl group and a 5'-terminal sugar phosphate. The chain is Probable endonuclease 4 from Yersinia pseudotuberculosis serotype O:1b (strain IP 31758).